The chain runs to 238 residues: ATP synthase subunit a (238 aa).

Helical transmembrane passes span 18 to 38 (LTLL…VFWA), 76 to 96 (YSLL…LGLF), 114 to 134 (NLAF…IEGV), 166 to 186 (SLAI…GLIV), and 193 to 213 (VYWW…SVFI).

The protein belongs to the ATPase A chain family. In terms of assembly, F-type ATPases have 2 components, CF(1) - the catalytic core - and CF(0) - the membrane proton channel. CF(1) has five subunits: alpha(3), beta(3), gamma(1), delta(1), epsilon(1). CF(0) has three main subunits: a(1), b(2) and c(9-12). The alpha and beta chains form an alternating ring which encloses part of the gamma chain. CF(1) is attached to CF(0) by a central stalk formed by the gamma and epsilon chains, while a peripheral stalk is formed by the delta and b chains.

The protein resides in the cell membrane. Functionally, key component of the proton channel; it plays a direct role in the translocation of protons across the membrane. The protein is ATP synthase subunit a of Streptococcus pyogenes serotype M1.